Consider the following 493-residue polypeptide: uncharacterized protein (493 aa).

Position 8-37 (8-37) interacts with FAD; that stretch reads DFLVVGGGTCGCVVAARLSEDPSATVMLLE. His-429 acts as the Proton acceptor in catalysis.

This sequence belongs to the GMC oxidoreductase family. The cofactor is FAD.

This is an uncharacterized protein from Rhodococcus erythropolis (Arthrobacter picolinophilus).